We begin with the raw amino-acid sequence, 202 residues long: Imidazoleglycerol-phosphate dehydratase (202 aa).

Belongs to the imidazoleglycerol-phosphate dehydratase family.

Its subcellular location is the cytoplasm. The enzyme catalyses D-erythro-1-(imidazol-4-yl)glycerol 3-phosphate = 3-(imidazol-4-yl)-2-oxopropyl phosphate + H2O. The protein operates within amino-acid biosynthesis; L-histidine biosynthesis; L-histidine from 5-phospho-alpha-D-ribose 1-diphosphate: step 6/9. The polypeptide is Imidazoleglycerol-phosphate dehydratase (Acinetobacter baumannii (strain SDF)).